The sequence spans 469 residues: Adenosylhomocysteinase (469 aa).

Residues threonine 63, aspartate 139, and glutamate 164 each contribute to the substrate site. 165 to 167 (TTT) is a binding site for NAD(+). Substrate contacts are provided by lysine 194 and aspartate 198. Residues asparagine 199, 228–233 (GYGDVG), glutamate 251, asparagine 300, 321–323 (IGH), and asparagine 375 each bind NAD(+).

The protein belongs to the adenosylhomocysteinase family. NAD(+) serves as cofactor.

The protein localises to the cytoplasm. The catalysed reaction is S-adenosyl-L-homocysteine + H2O = L-homocysteine + adenosine. The protein operates within amino-acid biosynthesis; L-homocysteine biosynthesis; L-homocysteine from S-adenosyl-L-homocysteine: step 1/1. Functionally, may play a key role in the regulation of the intracellular concentration of adenosylhomocysteine. The protein is Adenosylhomocysteinase of Pseudomonas entomophila (strain L48).